A 235-amino-acid chain; its full sequence is 2-C-methyl-D-erythritol 4-phosphate cytidylyltransferase (235 aa).

The protein belongs to the IspD/TarI cytidylyltransferase family. IspD subfamily.

The catalysed reaction is 2-C-methyl-D-erythritol 4-phosphate + CTP + H(+) = 4-CDP-2-C-methyl-D-erythritol + diphosphate. The protein operates within isoprenoid biosynthesis; isopentenyl diphosphate biosynthesis via DXP pathway; isopentenyl diphosphate from 1-deoxy-D-xylulose 5-phosphate: step 2/6. Catalyzes the formation of 4-diphosphocytidyl-2-C-methyl-D-erythritol from CTP and 2-C-methyl-D-erythritol 4-phosphate (MEP). This chain is 2-C-methyl-D-erythritol 4-phosphate cytidylyltransferase, found in Synechococcus sp. (strain JA-3-3Ab) (Cyanobacteria bacterium Yellowstone A-Prime).